The primary structure comprises 23 residues: Conotoxin as25a (23 aa).

At proline 4 the chain carries 4-hydroxyproline; partial. Residue proline 23 is modified to 4-hydroxyproline; partial; alternate. Proline 23 is subject to Proline amide; alternate.

The name as25b given in PubMed:23474143 corresponds to the hydroxylated peptide. The amidation of the C-terminus of this hydroxylated peptide is not directly confirmed. Post-translationally, contains 3 disulfide bonds. Expressed by the venom duct.

The protein localises to the secreted. Its function is as follows. Upon intracranial injection in mice, as25a (the toxin without the two 4-hydroxyprolines) provokes paralysis of the hind limbs and death with a dose of 240 pmol. The sequence is that of Conotoxin as25a from Conus cancellatus (Cancellate cone).